An 832-amino-acid chain; its full sequence is Mucosa-associated lymphoid tissue lymphoma translocation protein 1 homolog (832 aa).

The segment at 1-39 is disordered; it reads MSLWGQPLQASPPLAVRQPPTASSGPSTSPPAGATLNRL. An N-acetylserine modification is found at S2. The segment covering 19 to 39 has biased composition (low complexity); it reads PPTASSGPSTSPPAGATLNRL. One can recognise a Death domain in the interval 45–132; sequence RRLSESLDRA…EVLPLLNPPG (88 aa). Ig-like C2-type domains follow at residues 131-207 and 218-314; these read PGLK…FEFS and AEVT…KKAE. A Phosphoserine modification is found at S141. 2 disulfide bridges follow: C154-C196 and C257-C299. A caspase-like region spans residues 356 to 570; sequence IGNMSYWEHP…SLSEKRALTD (215 aa). Positions 377–384 match the Nuclear export signal motif; the sequence is LTNLLRQL. Active-site residues include H423 and C472.

Belongs to the peptidase C14B family. Homooligomer; forms oligomers which bind to TRAF6. Forms a complex with CARD14 and MALT1; resulting in the formation of a CBM (CARD14-BCL10-MALT1) complex. Forms a complex with CARD11 and MALT1; resulting in the formation of a CBM (CARD11-BCL10-MALT1) complex. Forms a complex with CARD9 and MALT1; resulting in the formation of a CBM (CARD9-BCL10-MALT1) complex.

It localises to the cytoplasm. The protein localises to the perinuclear region. Its subcellular location is the nucleus. In terms of biological role, protease that enhances BCL10-induced activation: acts via formation of CBM complexes that channel adaptive and innate immune signaling downstream of CARD domain-containing proteins (CARD9, CARD11 and CARD14) to activate NF-kappa-B and MAP kinase p38 pathways which stimulate expression of genes encoding pro-inflammatory cytokines and chemokines. Mediates BCL10 cleavage: MALT1-dependent BCL10 cleavage plays an important role in T-cell antigen receptor-induced integrin adhesion. Involved in the induction of T helper 17 cells (Th17) differentiation. Cleaves RC3H1 and ZC3H12A in response to T-cell receptor (TCR) stimulation which releases their cooperatively repressed targets to promote Th17 cell differentiation. Also mediates cleavage of N4BP1 in T-cells following TCR-mediated activation, leading to N4BP1 inactivation. May also have ubiquitin ligase activity: binds to TRAF6, inducing TRAF6 oligomerization and activation of its ligase activity. The protein is Mucosa-associated lymphoid tissue lymphoma translocation protein 1 homolog of Mus musculus (Mouse).